Consider the following 226-residue polypeptide: 7-cyano-7-deazaguanine synthase (226 aa).

11–21 (LSGGLDSATCL) contributes to the ATP binding site. Cysteine 191, cysteine 201, cysteine 204, and cysteine 207 together coordinate Zn(2+).

Belongs to the QueC family. Zn(2+) is required as a cofactor.

It catalyses the reaction 7-carboxy-7-deazaguanine + NH4(+) + ATP = 7-cyano-7-deazaguanine + ADP + phosphate + H2O + H(+). It participates in purine metabolism; 7-cyano-7-deazaguanine biosynthesis. Catalyzes the ATP-dependent conversion of 7-carboxy-7-deazaguanine (CDG) to 7-cyano-7-deazaguanine (preQ(0)). This is 7-cyano-7-deazaguanine synthase from Aromatoleum aromaticum (strain DSM 19018 / LMG 30748 / EbN1) (Azoarcus sp. (strain EbN1)).